The primary structure comprises 279 residues: Thiazole synthase (279 aa).

Lys-116 acts as the Schiff-base intermediate with DXP in catalysis. 1-deoxy-D-xylulose 5-phosphate is bound by residues Gly-177, 203 to 204 (AG), and 225 to 226 (NS).

Belongs to the ThiG family. Homotetramer. Forms heterodimers with either ThiH or ThiS.

It localises to the cytoplasm. It carries out the reaction [ThiS sulfur-carrier protein]-C-terminal-Gly-aminoethanethioate + 2-iminoacetate + 1-deoxy-D-xylulose 5-phosphate = [ThiS sulfur-carrier protein]-C-terminal Gly-Gly + 2-[(2R,5Z)-2-carboxy-4-methylthiazol-5(2H)-ylidene]ethyl phosphate + 2 H2O + H(+). It participates in cofactor biosynthesis; thiamine diphosphate biosynthesis. In terms of biological role, catalyzes the rearrangement of 1-deoxy-D-xylulose 5-phosphate (DXP) to produce the thiazole phosphate moiety of thiamine. Sulfur is provided by the thiocarboxylate moiety of the carrier protein ThiS. In vitro, sulfur can be provided by H(2)S. This is Thiazole synthase from Trichodesmium erythraeum (strain IMS101).